Consider the following 320-residue polypeptide: tRNA pseudouridine synthase B (320 aa).

The active-site Nucleophile is D49.

It belongs to the pseudouridine synthase TruB family. Type 1 subfamily.

The enzyme catalyses uridine(55) in tRNA = pseudouridine(55) in tRNA. Its function is as follows. Responsible for synthesis of pseudouridine from uracil-55 in the psi GC loop of transfer RNAs. The sequence is that of tRNA pseudouridine synthase B from Bartonella bacilliformis (strain ATCC 35685 / KC583 / Herrer 020/F12,63).